A 64-amino-acid chain; its full sequence is MPKLKTRKAALKRYKKTGAGNFLRRHAYKGHLLMKKSNAQKRKLSQRVCVSSGDSKPIKLMLPY.

This sequence belongs to the bacterial ribosomal protein bL35 family.

The protein localises to the plastid. Its subcellular location is the chloroplast. The polypeptide is Large ribosomal subunit protein bL35c (Thalassiosira pseudonana (Marine diatom)).